We begin with the raw amino-acid sequence, 99 residues long: Large ribosomal subunit protein uL23 (99 aa).

This sequence belongs to the universal ribosomal protein uL23 family. As to quaternary structure, part of the 50S ribosomal subunit. Contacts protein L29, and trigger factor when it is bound to the ribosome.

In terms of biological role, one of the early assembly proteins it binds 23S rRNA. One of the proteins that surrounds the polypeptide exit tunnel on the outside of the ribosome. Forms the main docking site for trigger factor binding to the ribosome. This Stenotrophomonas maltophilia (strain R551-3) protein is Large ribosomal subunit protein uL23.